We begin with the raw amino-acid sequence, 195 residues long: Nucleoid occlusion factor SlmA (195 aa).

Residues 6 to 66 (PSRRESILQA…ALIEFAEEAV (61 aa)) enclose the HTH tetR-type domain. The H-T-H motif DNA-binding region spans 29 to 48 (TTAGLAKTVGVTEAALYRHF). Positions 118–138 (RKRASQFFERLETQIRQALKE) form a coiled coil.

The protein belongs to the nucleoid occlusion factor SlmA family. Homodimer. Interacts with FtsZ.

It localises to the cytoplasm. The protein localises to the nucleoid. Functionally, required for nucleoid occlusion (NO) phenomenon, which prevents Z-ring formation and cell division over the nucleoid. Acts as a DNA-associated cell division inhibitor that binds simultaneously chromosomal DNA and FtsZ, and disrupts the assembly of FtsZ polymers. SlmA-DNA-binding sequences (SBS) are dispersed on non-Ter regions of the chromosome, preventing FtsZ polymerization at these regions. In Marinobacter nauticus (strain ATCC 700491 / DSM 11845 / VT8) (Marinobacter aquaeolei), this protein is Nucleoid occlusion factor SlmA.